Here is a 213-residue protein sequence, read N- to C-terminus: Ribosomal RNA large subunit methyltransferase E (213 aa).

S-adenosyl-L-methionine-binding residues include Gly-59, Phe-61, Asp-79, Asp-97, and Asp-121. Lys-161 serves as the catalytic Proton acceptor.

It belongs to the class I-like SAM-binding methyltransferase superfamily. RNA methyltransferase RlmE family.

Its subcellular location is the cytoplasm. The catalysed reaction is uridine(2552) in 23S rRNA + S-adenosyl-L-methionine = 2'-O-methyluridine(2552) in 23S rRNA + S-adenosyl-L-homocysteine + H(+). Specifically methylates the uridine in position 2552 of 23S rRNA at the 2'-O position of the ribose in the fully assembled 50S ribosomal subunit. This is Ribosomal RNA large subunit methyltransferase E from Myxococcus xanthus (strain DK1622).